Reading from the N-terminus, the 247-residue chain is 4-hydroxy-tetrahydrodipicolinate reductase (247 aa).

NAD(+)-binding positions include 12–17 (GITGRM), 78–80 (GTT), and 102–105 (AANF). His136 functions as the Proton donor/acceptor in the catalytic mechanism. His137 is a binding site for (S)-2,3,4,5-tetrahydrodipicolinate. The Proton donor role is filled by Lys140. Residue 146-147 (GT) coordinates (S)-2,3,4,5-tetrahydrodipicolinate.

The protein belongs to the DapB family.

The protein resides in the cytoplasm. It catalyses the reaction (S)-2,3,4,5-tetrahydrodipicolinate + NAD(+) + H2O = (2S,4S)-4-hydroxy-2,3,4,5-tetrahydrodipicolinate + NADH + H(+). The enzyme catalyses (S)-2,3,4,5-tetrahydrodipicolinate + NADP(+) + H2O = (2S,4S)-4-hydroxy-2,3,4,5-tetrahydrodipicolinate + NADPH + H(+). It functions in the pathway amino-acid biosynthesis; L-lysine biosynthesis via DAP pathway; (S)-tetrahydrodipicolinate from L-aspartate: step 4/4. Functionally, catalyzes the conversion of 4-hydroxy-tetrahydrodipicolinate (HTPA) to tetrahydrodipicolinate. In Acidiphilium cryptum (strain JF-5), this protein is 4-hydroxy-tetrahydrodipicolinate reductase.